The following is a 76-amino-acid chain: MAKISCSYLLILMLALSVFSVVEKAKGDKRCSIIIDLSPCYPIECRLSCITERNGDGECVVSKVGSTPNCLCTYDC.

The first 27 residues, 1–27 (MAKISCSYLLILMLALSVFSVVEKAKG), serve as a signal peptide directing secretion. 4 cysteine pairs are disulfide-bonded: Cys-31/Cys-76, Cys-40/Cys-59, Cys-45/Cys-70, and Cys-49/Cys-72.

It belongs to the DEFL family.

The protein resides in the secreted. The polypeptide is Defensin-like protein 155 (LCR36) (Arabidopsis thaliana (Mouse-ear cress)).